The sequence spans 91 residues: Small ribosomal subunit protein uS19 (91 aa).

The interval 72 to 91 (GEFSPTRKFGGHGDDKKKKK) is disordered. Residues 82–91 (GHGDDKKKKK) are compositionally biased toward basic and acidic residues.

It belongs to the universal ribosomal protein uS19 family.

In terms of biological role, protein S19 forms a complex with S13 that binds strongly to the 16S ribosomal RNA. In Spiroplasma kunkelii, this protein is Small ribosomal subunit protein uS19.